We begin with the raw amino-acid sequence, 323 residues long: Ankyrin repeat and SOCS box protein 11 (323 aa).

ANK repeat units follow at residues 64–93 (ADRSPLHEAAAQGRLLALKTLIAQGVNVNL), 97–126 (NRVSSLHEACLGGHVACAKALLENGAHVNG), 130–159 (HGATPLFNACCSGSAACVNVLLEFGAKAQL), 162–191 (HLASPIHEAVKRGHRECMEILLANNVNIDH), 195–224 (QLGTPLYVACTYQRVDCVKKLLELGASVDH), and 227–256 (WLDTPLHAAARQSNVEVIHLLTDYGANLKR). The SOCS box domain maps to 273–323 (SVEQALLLREGPPALSQLCRLCVRKCLGRACHQAIHKLHLPEPLERFLLYQ).

This sequence belongs to the ankyrin SOCS box (ASB) family. As to quaternary structure, substrate-recognition component of the ECS(ASB11) complex, composed of ASB11, CUL5, ELOB, ELOC and RNF7/RBX2.

Its subcellular location is the endoplasmic reticulum. The protein operates within protein modification; protein ubiquitination. In terms of biological role, substrate-recognition component of a cullin-5-RING E3 ubiquitin-protein ligase complex (ECS complex, also named CRL5 complex), which mediates the ubiquitination and subsequent proteasomal degradation of target proteins, such as BIK, DIRAS2 and RPN1. The ECS(ASB11) complex acts as a regulator of the endoplasmic reticulum unfolded protein response by mediating ubiquitination and degradation of BIK. This Homo sapiens (Human) protein is Ankyrin repeat and SOCS box protein 11.